The sequence spans 180 residues: ATP-dependent protease subunit HslV (180 aa).

Threonine 8 is a catalytic residue. Na(+)-binding residues include glycine 165, aspartate 168, and threonine 171.

Belongs to the peptidase T1B family. HslV subfamily. A double ring-shaped homohexamer of HslV is capped on each side by a ring-shaped HslU homohexamer. The assembly of the HslU/HslV complex is dependent on binding of ATP.

It is found in the cytoplasm. The catalysed reaction is ATP-dependent cleavage of peptide bonds with broad specificity.. Allosterically activated by HslU binding. In terms of biological role, protease subunit of a proteasome-like degradation complex believed to be a general protein degrading machinery. The chain is ATP-dependent protease subunit HslV from Lactiplantibacillus plantarum (strain ATCC BAA-793 / NCIMB 8826 / WCFS1) (Lactobacillus plantarum).